Here is a 235-residue protein sequence, read N- to C-terminus: Small ribosomal subunit protein uS2 (235 aa).

Belongs to the universal ribosomal protein uS2 family.

This Geobacillus kaustophilus (strain HTA426) protein is Small ribosomal subunit protein uS2.